The sequence spans 126 residues: MPNLQGNRTLTEWLTLLLGVIVLLVGLFFVIGGADLAMLGGSTYYVLCGILLVASGVFMLMGRTLGAFLYLGALAYTWVWSFWEVGFSPIDLLPRAFGPTILGILVALTIPVLRRMESRRTLRGAV.

Helical transmembrane passes span 13–33 (WLTL…VIGG), 41–61 (GSTY…FMLM), 67–87 (AFLY…EVGF), and 92–112 (LLPR…TIPV).

It localises to the cell membrane. The catalysed reaction is glycerol + A = dihydroxyacetone + AH2. In terms of biological role, catalyzes the oxidation of glycerol to glycerone. Also acts, more slowly, on a number of other polyols including D-sorbitol, D-arabinitol, D-mannitol, meso-erythritol, adonitol and propylene glycol. The polypeptide is Glycerol dehydrogenase small subunit (sldB) (Gluconobacter thailandicus).